The sequence spans 454 residues: uncharacterized protein (454 aa).

The region spanning 364–405 (CSRPGCDAPAYHSEVHHVTPWTTTHRTDINDLTLACGPDNRL) is the HNH domain.

The protein belongs to the Rv1128c/1148c/1588c/1702c/1945/3466 family.

This is an uncharacterized protein from Mycobacterium tuberculosis (strain CDC 1551 / Oshkosh).